A 4678-amino-acid chain; its full sequence is E3 ubiquitin-protein ligase MYCBP2 (4678 aa).

Disordered stretches follow at residues 87–127, 172–192, and 609–628; these read DRDQ…RSKS, SKNS…SKEP, and ASKG…KPYK. Residues 100–124 show a composition bias toward basic residues; it reads SRNKKILNKKKLKRKQKSKSKVKTR. Residues S127, S178, S181, and S183 each carry the phosphoserine modification. 5 RCC1 repeats span residues 600 to 655, 699 to 755, 907 to 957, 958 to 1008, and 1010 to 1066; these read DGSI…VISK, NGEV…MMCP, KRDK…VLME, NGDV…VLLM, and GQVF…LRID. Over residues 898 to 910 the composition is skewed to basic residues; that stretch reads RSHPAQLKHKRDK. A disordered region spans residues 898–928; that stretch reads RSHPAQLKHKRDKHKDGSGERGEKDASKITT. The span at 911-924 shows a compositional bias: basic and acidic residues; it reads HKDGSGERGEKDAS. Residues 1235-1386 are PHR domain 1; the sequence is NRFESHGGGW…GQIPQLLYRL (152 aa). A Phosphoserine modification is found at S1624. The interval 1726–1884 is PHR domain 2; the sequence is NRFTKTSQGR…GQIPQILYYR (159 aa). C1748 and C1863 form a disulfide bridge. Disordered regions lie at residues 1993 to 2012 and 2321 to 2340; these read FNPN…QGLS and QQDQ…VTAA. Over residues 1994 to 2012 the composition is skewed to polar residues; the sequence is NPNQSTDSTTGNQPEQGLS. The interval 2022–2550 is RAE1 binding; that stretch reads VIESEHPYKP…NQHLGKSLLV (529 aa). A Filamin repeat occupies 2341–2443; that stretch reads SSNTDMTYGG…IDAGLEVKVK (103 aa). At T2683 the chain carries Phosphothreonine. 4 disordered regions span residues 2709-2931, 2943-2963, 2979-3020, and 3066-3085; these read LGNS…LHSE, TNSL…VDEG, EQEM…EPAK, and APIR…ETKL. Polar residues predominate over residues 2718 to 2733; sequence NISTSSKPASTSGKSE. A compositionally biased stretch (basic and acidic residues) spans 2742–2760; the sequence is LKPDGRMSRTTADQKKPRG. At S2769 the chain carries Phosphoserine. Over residues 2775 to 2785 the composition is skewed to basic and acidic residues; the sequence is DAAKLRSDSHS. A compositionally biased stretch (polar residues) spans 2786–2810; the sequence is RSLSPNHNTLQTLKSDGRMPSSSRA. Phosphoserine occurs at positions 2787, 2789, 2833, 2839, 2869, 2871, and 2920. Low complexity predominate over residues 2828-2843; that stretch reads PANRSSPSGASSPRSS. The segment covering 2860-2871 has biased composition (basic and acidic residues); it reads TKLDPPRERSKS. Phosphoserine is present on S2985. Residues 2988–3001 show a composition bias toward basic residues; that stretch reads ISRKCANRHTRPKK. Phosphoserine is present on residues S3090, S3478, and S3505. The segment at 3605 to 3631 is disordered; that stretch reads PVEPEEEEDEENKTSKENSEQEKDTRV. Basic and acidic residues predominate over residues 3616–3631; it reads NKTSKENSEQEKDTRV. One can recognise a DOC domain in the interval 3719-3897; that stretch reads SISIQSGFEA…VAQQRNCEAE (179 aa). The tract at residues 3915–3934 is disordered; sequence SGDAEPTPEQEEKALLSSPE. T3921 carries the phosphothreonine modification. A phosphoserine mark is found at S3931 and S3932. Zn(2+) is bound by residues C4428, C4431, C4446, H4448, H4451, C4454, C4475, C4478, C4544, and C4547. The segment at 4428–4479 adopts an RING-type; atypical zinc-finger fold; it reads CMICFTEALSAAPAIQLDCSHIFHLQCCRRVLENRWLGPRITFGFISCPICK. The segment at 4539-4676 is tandem cysteine domain; sequence YAYYVCYKCR…LGCGVCRNAH (138 aa). C4558 is a catalytic residue. Residues C4575, C4578, C4587, H4590, C4599, C4602, and C4603 each coordinate Zn(2+). C4610 is a catalytic residue. C4617, C4620, C4638, C4652, H4658, C4669, and C4672 together coordinate Zn(2+).

This sequence belongs to the RING-Cys relay (RCR) family. As to quaternary structure, interacts with MYC. Interacts with TSC2 (tuberin) when TSC2 is in complex with TSC1 (hamartin). Interacts with FBXO45. Interacts with RAE1. Interacts with CPNE1 (via VWFA domain) and CPNE4 (via VWFA domain). Interacts with (sumoylated) RANGAP1; interaction with sumoylated RANGAP1 inhibits E3 ubiquitin-protein ligase activity and promotes MYCBP2 translocation to the nucleus. Interacts with RAN. Interacts with ATP13A2; the interaction inhibits the ubiquitination of TSC2 by MYCBP2. Interacts with USP11. Post-translationally, autoubiquitinated. As to expression, expressed in all tissues examined, expression is exceptionally abundant in brain and thymus. Colocalizes with TSC1 and TSC2 along the neurites and in the growth cones. Highly expressed in peripheral and central neurons. Colocalized with TSC1 in one of the filopodial extensions at the tip of a growth cone.

It localises to the nucleus. The protein localises to the cell projection. It is found in the axon. The protein resides in the cytoplasm. Its subcellular location is the cytoskeleton. The catalysed reaction is [E2 ubiquitin-conjugating enzyme]-S-ubiquitinyl-L-cysteine + [acceptor protein]-L-threonine = [E2 ubiquitin-conjugating enzyme]-L-cysteine + [acceptor protein]-3-O-ubiquitinyl-L-threonine.. The protein operates within protein modification; protein ubiquitination. Its function is as follows. Atypical E3 ubiquitin-protein ligase which specifically mediates ubiquitination of threonine and serine residues on target proteins, instead of ubiquitinating lysine residues. Shows esterification activity towards both threonine and serine, with a preference for threonine, and acts via two essential catalytic cysteine residues that relay ubiquitin to its substrate via thioester intermediates. Interacts with the E2 enzymes UBE2D1, UBE2D3, UBE2E1 and UBE2L3. Plays a key role in neural development, probably by mediating ubiquitination of threonine residues on target proteins. Involved in different processes such as regulation of neurite outgrowth, synaptic growth, synaptogenesis and axon degeneration. Required for the formation of major central nervous system axon tracts. Required for proper axon growth by regulating axon navigation and axon branching: acts by regulating the subcellular location and stability of MAP3K12/DLK. Required for proper localization of retinogeniculate projections but not for eye-specific segregation. Regulates axon guidance in the olfactory system. Involved in Wallerian axon degeneration, an evolutionarily conserved process that drives the loss of damaged axons: acts by promoting destabilization of NMNAT2, probably via ubiquitination of NMNAT2. Catalyzes ubiquitination of threonine and/or serine residues on NMNAT2, consequences of threonine and/or serine ubiquitination are however unknown. Regulates the internalization of TRPV1 in peripheral sensory neurons. Mediates ubiquitination and subsequent proteasomal degradation of TSC2/tuberin. Independently of the E3 ubiquitin-protein ligase activity, also acts as a guanosine exchange factor (GEF) for RAN in neurons of dorsal root ganglia. May function as a facilitator or regulator of transcriptional activation by MYC. Acts in concert with HUWE1 to regulate the circadian clock gene expression by promoting the lithium-induced ubiquination and degradation of NR1D1. The chain is E3 ubiquitin-protein ligase MYCBP2 from Homo sapiens (Human).